The primary structure comprises 458 residues: Tyrosine phenol-lyase (458 aa).

N6-(pyridoxal phosphate)lysine is present on Lys258.

The protein belongs to the beta-eliminating lyase family. In terms of assembly, homotetramer. The cofactor is pyridoxal 5'-phosphate.

It catalyses the reaction L-tyrosine + H2O = phenol + pyruvate + NH4(+). This chain is Tyrosine phenol-lyase (tpl), found in Symbiobacterium thermophilum (strain DSM 24528 / JCM 14929 / IAM 14863 / T).